The following is a 245-amino-acid chain: Pyridoxine 5'-phosphate synthase (245 aa).

Asn7 contacts 3-amino-2-oxopropyl phosphate. 9 to 10 (DH) is a binding site for 1-deoxy-D-xylulose 5-phosphate. Arg18 contributes to the 3-amino-2-oxopropyl phosphate binding site. His43 (proton acceptor) is an active-site residue. 1-deoxy-D-xylulose 5-phosphate contacts are provided by Arg45 and His50. Catalysis depends on Glu70, which acts as the Proton acceptor. 1-deoxy-D-xylulose 5-phosphate is bound at residue Thr100. The active-site Proton donor is the His190. 3-amino-2-oxopropyl phosphate contacts are provided by residues Gly191 and 212-213 (GH).

It belongs to the PNP synthase family. As to quaternary structure, homooctamer; tetramer of dimers.

Its subcellular location is the cytoplasm. The enzyme catalyses 3-amino-2-oxopropyl phosphate + 1-deoxy-D-xylulose 5-phosphate = pyridoxine 5'-phosphate + phosphate + 2 H2O + H(+). It functions in the pathway cofactor biosynthesis; pyridoxine 5'-phosphate biosynthesis; pyridoxine 5'-phosphate from D-erythrose 4-phosphate: step 5/5. Functionally, catalyzes the complicated ring closure reaction between the two acyclic compounds 1-deoxy-D-xylulose-5-phosphate (DXP) and 3-amino-2-oxopropyl phosphate (1-amino-acetone-3-phosphate or AAP) to form pyridoxine 5'-phosphate (PNP) and inorganic phosphate. In Prochlorococcus marinus (strain MIT 9303), this protein is Pyridoxine 5'-phosphate synthase.